A 401-amino-acid polypeptide reads, in one-letter code: Methionine import ATP-binding protein MetN (401 aa).

Positions 6 to 248 constitute an ABC transporter domain; sequence ITFDHVVKEF…PQQPVTKRFI (243 aa). 45–52 contacts ATP; it reads GYSGAGKS.

It belongs to the ABC transporter superfamily. Methionine importer (TC 3.A.1.24) family. The complex is composed of two ATP-binding proteins (MetN), two transmembrane proteins (MetI) and a solute-binding protein (MetQ).

It localises to the cell membrane. It carries out the reaction L-methionine(out) + ATP + H2O = L-methionine(in) + ADP + phosphate + H(+). The catalysed reaction is D-methionine(out) + ATP + H2O = D-methionine(in) + ADP + phosphate + H(+). Its function is as follows. Part of the ABC transporter complex MetNIQ involved in methionine import. Responsible for energy coupling to the transport system. The chain is Methionine import ATP-binding protein MetN from Bifidobacterium longum (strain NCC 2705).